The chain runs to 72 residues: Small ribosomal subunit protein bS18 (72 aa).

This sequence belongs to the bacterial ribosomal protein bS18 family. As to quaternary structure, part of the 30S ribosomal subunit. Forms a tight heterodimer with protein bS6.

Binds as a heterodimer with protein bS6 to the central domain of the 16S rRNA, where it helps stabilize the platform of the 30S subunit. The chain is Small ribosomal subunit protein bS18 from Francisella tularensis subsp. holarctica (strain OSU18).